Consider the following 336-residue polypeptide: Flavonoid 4'-O-methyltransferase 3 (336 aa).

2 residues coordinate S-adenosyl-L-methionine: Tyr140 and Asp203. The active-site Proton acceptor is the His241.

The protein belongs to the class I-like SAM-binding methyltransferase superfamily. Cation-independent O-methyltransferase family. As to quaternary structure, homodimer. In terms of tissue distribution, expressed in leaves.

The catalysed reaction is scutellarein 7-methyl ether + S-adenosyl-L-methionine = ladanein + S-adenosyl-L-homocysteine + H(+). It carries out the reaction cirsimaritin + S-adenosyl-L-methionine = salvigenin + S-adenosyl-L-homocysteine + H(+). It catalyses the reaction cirsiliol + S-adenosyl-L-methionine = eupatorin + S-adenosyl-L-homocysteine + H(+). The enzyme catalyses genkwanin + S-adenosyl-L-methionine = apigenin 4',7-dimethyl ether + S-adenosyl-L-homocysteine. Its pathway is flavonoid metabolism. Substrate inhibition by genkwanin (GENK) at concentrations above 2.5 mM. Flavonoid 4'-O-methyltransferase involved in the biosynthesis of polymethoxylated flavonoids natural products such as nevadensin and salvigenin, aroma compounds which contribute to the flavor of sweet basil, and exhibit pharmacological activities such as anti-allergic, anti-oxidant, antibacterial, anti-proliferative, and anti-inflammatory effects. Catalyzes S-adenosylmethionine-dependent regioselective 4'-O-methylation of flavonoids; active on various hydroxylated flavonoid substrates, including scutellarein-7-methyl ether (SCU7Me) and cirsimaritin (CIRM), and, with a lower efficiency, hispidulin, ladanein (LAD), cirsioliol (CIRL) and genkwanin (GENK). The sequence is that of Flavonoid 4'-O-methyltransferase 3 from Ocimum basilicum (Sweet basil).